The following is a 529-amino-acid chain: Peptide chain release factor 3 (529 aa).

In terms of domain architecture, tr-type G spans 11 to 280 (AKRRTFAIIS…GLVEWAPAPM (270 aa)). GTP-binding positions include 20–27 (SHPDAGKT), 88–92 (DTPGH), and 142–145 (NKLD).

The protein belongs to the TRAFAC class translation factor GTPase superfamily. Classic translation factor GTPase family. PrfC subfamily.

The protein localises to the cytoplasm. Functionally, increases the formation of ribosomal termination complexes and stimulates activities of RF-1 and RF-2. It binds guanine nucleotides and has strong preference for UGA stop codons. It may interact directly with the ribosome. The stimulation of RF-1 and RF-2 is significantly reduced by GTP and GDP, but not by GMP. The chain is Peptide chain release factor 3 from Shigella sonnei (strain Ss046).